We begin with the raw amino-acid sequence, 69 residues long: Protein transport protein Sec61 subunit gamma-3 (69 aa).

Position 1 is an N-acetylmethionine (methionine 1). Residues 1–32 (MEAIDSAIDPLRDFAKSSVRLVQRCHKPDRKE) lie on the Cytoplasmic side of the membrane. A helical transmembrane segment spans residues 33–61 (FTKVAVRTAIGFVVMGFVGFFVKLVFIPI). Topologically, residues 62–69 (NNIIVGSS) are extracellular.

This sequence belongs to the SecE/SEC61-gamma family. In terms of assembly, heterotrimeric complex composed of SEC61-alpha, SEC61-beta and SEC61-gamma.

The protein localises to the endoplasmic reticulum membrane. Its function is as follows. Necessary for protein translocation in the endoplasmic reticulum. The sequence is that of Protein transport protein Sec61 subunit gamma-3 (SEC61G3) from Arabidopsis thaliana (Mouse-ear cress).